A 258-amino-acid chain; its full sequence is NAD kinase (258 aa).

Asp45 (proton acceptor) is an active-site residue. Residues 45–46 (DG), 117–118 (NE), Asp147, Ala155, 158–163 (TAYNYS), and Ala182 contribute to the NAD(+) site.

The protein belongs to the NAD kinase family. The cofactor is a divalent metal cation.

It is found in the cytoplasm. It catalyses the reaction NAD(+) + ATP = ADP + NADP(+) + H(+). In terms of biological role, involved in the regulation of the intracellular balance of NAD and NADP, and is a key enzyme in the biosynthesis of NADP. Catalyzes specifically the phosphorylation on 2'-hydroxyl of the adenosine moiety of NAD to yield NADP. The chain is NAD kinase from Xanthomonas oryzae pv. oryzae (strain MAFF 311018).